Here is a 319-residue protein sequence, read N- to C-terminus: Large ribosomal subunit protein uL29m (319 aa).

Positions 1–55 (MWKRSFHSQGGPLRARTKFTKPKPKQPVLPKDKIRPPTQLTHHSNNLRITEPIPP) are disordered. Positions 15–24 (ARTKFTKPKP) are enriched in basic residues. Polar residues predominate over residues 38–48 (TQLTHHSNNLR).

This sequence belongs to the universal ribosomal protein uL29 family. As to quaternary structure, component of the mitochondrial large ribosomal subunit. Mature mitochondrial ribosomes consist of a small (37S) and a large (54S) subunit. The 37S subunit contains at least 33 different proteins and 1 molecule of RNA (15S). The 54S subunit contains at least 45 different proteins and 1 molecule of RNA (21S).

The protein localises to the mitochondrion. The chain is Large ribosomal subunit protein uL29m (MRPL4) from Saccharomyces cerevisiae (strain YJM789) (Baker's yeast).